Reading from the N-terminus, the 129-residue chain is UPF0102 protein CPS_4433 (129 aa).

The protein belongs to the UPF0102 family.

The polypeptide is UPF0102 protein CPS_4433 (Colwellia psychrerythraea (strain 34H / ATCC BAA-681) (Vibrio psychroerythus)).